A 278-amino-acid chain; its full sequence is DNA oxidative demethylase ALKBH2 (278 aa).

Positions 1 to 49 are disordered; sequence MDRFLVKGAVGSLKRRMEQEQTGGGPAGLAEEEGNSKKNPRRAAPGNGV. The short motif at 3–7 is the PCNA-binding element; that stretch reads RFLVK. Substrate-binding positions include 101 to 103 and 121 to 123; these read FGK and YTF. The Fe2OG dioxygenase domain occupies 151-256; that stretch reads TFNFVLINRY…RVNLTFRKIL (106 aa). Positions 158, 160, and 170 each coordinate 2-oxoglutarate. Fe cation contacts are provided by histidine 170 and aspartate 172. Aspartate 173 lines the substrate pocket. 2-oxoglutarate contacts are provided by histidine 235, arginine 247, threonine 251, and arginine 253. Position 235 (histidine 235) interacts with Fe cation.

The protein belongs to the alkB family. In terms of assembly, interacts with PCNA homotrimer; this interaction is enhanced during the S-phase of the cell cycle. Interacts with nucleolar proteins NCL, UBTF and NPM1. Interacts with XRCC5-XRCC6 heterodimer. Fe(2+) serves as cofactor.

It is found in the nucleus. Its subcellular location is the nucleolus. It localises to the nucleoplasm. It carries out the reaction a methylated nucleobase within DNA + 2-oxoglutarate + O2 = a nucleobase within DNA + formaldehyde + succinate + CO2. The enzyme catalyses an N(1)-methyl-2'-deoxyadenosine in double-stranded DNA + 2-oxoglutarate + O2 = a 2'-deoxyadenosine in double-stranded DNA + formaldehyde + succinate + CO2 + H(+). It catalyses the reaction an N(1)-methyl-2'-deoxyadenosine in single-stranded DNA + 2-oxoglutarate + O2 = a 2'-deoxyadenosine in single-stranded DNA + formaldehyde + succinate + CO2 + H(+). The catalysed reaction is an N(3)-methyl-2'-deoxycytidine in double-stranded DNA + 2-oxoglutarate + O2 = a 2'-deoxycytidine in double-stranded DNA + formaldehyde + succinate + CO2 + H(+). It carries out the reaction an N(3)-methyl-2'-deoxycytidine in single-stranded DNA + 2-oxoglutarate + O2 = a 2'-deoxycytidine in single-stranded DNA + formaldehyde + succinate + CO2 + H(+). The enzyme catalyses a 1,N(6)-etheno-2'-deoxyadenosine in double-stranded DNA + 2-oxoglutarate + O2 + H2O = a 2'-deoxyadenosine in double-stranded DNA + glyoxal + succinate + CO2. It catalyses the reaction a 1,N(6)-etheno-2'-deoxyadenosine in single-stranded DNA + 2-oxoglutarate + O2 + H2O = a 2'-deoxyadenosine in single-stranded DNA + glyoxal + succinate + CO2. The catalysed reaction is a 3,N(4)-etheno-2'-deoxycytidine in double-stranded DNA + 2-oxoglutarate + O2 + H2O = a 2'-deoxycytidine in double-stranded DNA + glyoxal + succinate + CO2. It carries out the reaction a 3,N(4)-etheno-2'-deoxycytidine in single-stranded DNA + 2-oxoglutarate + O2 + H2O = a 2'-deoxycytidine in single-stranded DNA + glyoxal + succinate + CO2. The enzyme catalyses a 1,N(2)-etheno-2'-deoxyguanosine in double-stranded DNA + 2-oxoglutarate + O2 + H2O = a 2'-deoxyguanosine in double-stranded DNA + glyoxal + succinate + CO2. With respect to regulation, activated by ascorbate and magnesium ions. In terms of biological role, dioxygenase that repairs alkylated nucleic acid bases by direct reversal oxidative dealkylation. Can process both double-stranded (ds) and single-stranded (ss) DNA substrates, with a strong preference for dsDNA. Uses molecular oxygen, 2-oxoglutarate and iron as cofactors to oxidize the alkyl groups that are subsequently released as aldehydes, regenerating the undamaged bases. Probes the base pair stability, locates a weakened base pair and flips the damaged base to accommodate the lesion in its active site for efficient catalysis. Repairs monoalkylated bases, specifically N1-methyladenine and N3-methylcytosine, as well as higher order alkyl adducts such as bases modified with exocyclic bridged adducts known as etheno adducts including 1,N6-ethenoadenine, 3,N4-ethenocytosine and 1,N2-ethenoguanine. Acts as a gatekeeper of genomic integrity under alkylation stress. Efficiently repairs alkylated lesions in ribosomal DNA (rDNA). These lesions can cause ss- and dsDNA strand breaks that severely impair rDNA transcription. In a response mechanism to DNA damage, associates with PCNA at replication forks to repair alkylated adducts prior to replication. In Bos taurus (Bovine), this protein is DNA oxidative demethylase ALKBH2 (ALKBH2).